A 132-amino-acid polypeptide reads, in one-letter code: Major pollen allergen Art v 1 (132 aa).

A signal peptide spans 1-24 (MAKCSYVFCAVLLIFIVAIGEMEA). The defensin-like domain stretch occupies residues 28-77 (KLCEKTSKTYSGKCDNKKCDKKCIEWEKAQHGACHKREAGKESCFCYFDC). Disulfide bonds link Cys-30–Cys-77, Cys-41–Cys-61, Cys-46–Cys-71, and Cys-50–Cys-73. Epitope recognized by IgE antibodies of mugwort pollen-sensitized patients regions lie at residues 64-70 (REAGKES) and 79-87 (KSPPGATPA). Residues 81–132 (PPGATPAPPGAAPPPAAGGSPSPPADGGSPPPPADGGSPPVDGGSPPPPSTH) are disordered. Pro residues predominate over residues 83-114 (GATPAPPGAAPPPAAGGSPSPPADGGSPPPPA). Low complexity predominate over residues 115–124 (DGGSPPVDGG).

The protein in the N-terminal section; belongs to the DEFL family. In terms of processing, the mature protein extracted from the plant exhibits an average rate of 76% of hydroxyprolines. Post-translationally, O-glycosylated. O-linkage of 3 galactoses plus 9-16 or 21-23 arabinose residues attached on one or two hydroxyprolines.

It is found in the secreted. This is Major pollen allergen Art v 1 from Artemisia vulgaris (Mugwort).